A 381-amino-acid chain; its full sequence is Heme A synthase (381 aa).

Residues 1-28 (MSNRTIFEEVSSDSKQQSSPTPGGIDRK) are disordered. 8 helical membrane passes run 36–56 (IRVW…VGGL), 125–145 (VIGL…SIPT), 151–171 (LLLP…MVAS), 187–207 (LATH…YMFL), 230–250 (STGL…VAGI), 287–307 (LVQF…VVVW), 320–340 (FAFN…IVTV), and 344–364 (APVE…VLIL). His292 serves as a coordination point for heme. His352 contacts heme.

This sequence belongs to the COX15/CtaA family. Type 2 subfamily. As to quaternary structure, interacts with CtaB. The cofactor is heme b.

The protein resides in the cell membrane. The enzyme catalyses Fe(II)-heme o + 2 A + H2O = Fe(II)-heme a + 2 AH2. The protein operates within porphyrin-containing compound metabolism; heme A biosynthesis; heme A from heme O: step 1/1. Functionally, catalyzes the conversion of heme O to heme A by two successive hydroxylations of the methyl group at C8. The first hydroxylation forms heme I, the second hydroxylation results in an unstable dihydroxymethyl group, which spontaneously dehydrates, resulting in the formyl group of heme A. This Ruegeria sp. (strain TM1040) (Silicibacter sp.) protein is Heme A synthase.